The chain runs to 260 residues: Circadian clock-controlled protein daywake (260 aa).

The N-terminal stretch at 1 to 25 is a signal peptide; it reads MQLTSASVCLLWMGLLSWVSHRIDA.

This sequence belongs to the TO family.

Functionally, component of the circadian clock or downstream effector of clock function. Required for suppressing daytime sleep (siesta) under ambient environmental temperatures. Part of a heat avoidance mechanism that modulates daytime sleep behavior under different environmental temperatures to minimize the risk of heat exposure. Under cooler ambient temperatures, suppresses daytime sleep (siesta) and thus allows for longer periods of daytime activity. In Drosophila yakuba (Fruit fly), this protein is Circadian clock-controlled protein daywake.